Reading from the N-terminus, the 389-residue chain is S-adenosylmethionine synthase (389 aa).

H15 is a binding site for ATP. Residue D17 coordinates Mg(2+). Residue E43 coordinates K(+). 2 residues coordinate L-methionine: E56 and Q99. The interval 99 to 109 (QSSDIQYSIDH) is flexible loop. ATP is bound by residues 166-168 (DAK), 232-233 (RF), D241, 247-248 (RK), S264, and K268. An L-methionine-binding site is contributed by D241. Residue K272 participates in L-methionine binding.

The protein belongs to the AdoMet synthase family. Homotetramer; dimer of dimers. Requires Mg(2+) as cofactor. K(+) serves as cofactor.

It localises to the cytoplasm. It catalyses the reaction L-methionine + ATP + H2O = S-adenosyl-L-methionine + phosphate + diphosphate. Its pathway is amino-acid biosynthesis; S-adenosyl-L-methionine biosynthesis; S-adenosyl-L-methionine from L-methionine: step 1/1. Its function is as follows. Catalyzes the formation of S-adenosylmethionine (AdoMet) from methionine and ATP. The overall synthetic reaction is composed of two sequential steps, AdoMet formation and the subsequent tripolyphosphate hydrolysis which occurs prior to release of AdoMet from the enzyme. This chain is S-adenosylmethionine synthase, found in Blochmanniella pennsylvanica (strain BPEN).